The primary structure comprises 119 residues: Glucitol operon activator protein (119 aa).

The segment at residues 23-29 (QISRFNR) is a DNA-binding region (H-T-H motif).

Functionally, positive regulator for glucitol operon expression. In Escherichia coli (strain K12), this protein is Glucitol operon activator protein (gutM).